Consider the following 88-residue polypeptide: Small ribosomal subunit protein uS15c (88 aa).

Belongs to the universal ribosomal protein uS15 family. As to quaternary structure, part of the 30S ribosomal subunit.

Its subcellular location is the plastid. The protein resides in the chloroplast. The sequence is that of Small ribosomal subunit protein uS15c (rps15) from Pinus thunbergii (Japanese black pine).